Consider the following 857-residue polypeptide: Leucine--tRNA ligase (857 aa).

Residues 42–52 carry the 'HIGH' region motif; the sequence is PYPSGTLHMGH. Positions 616–620 match the 'KMSKS' region motif; it reads KMSKS. An ATP-binding site is contributed by Lys619.

This sequence belongs to the class-I aminoacyl-tRNA synthetase family.

The protein resides in the cytoplasm. It carries out the reaction tRNA(Leu) + L-leucine + ATP = L-leucyl-tRNA(Leu) + AMP + diphosphate. In Parasynechococcus marenigrum (strain WH8102), this protein is Leucine--tRNA ligase.